A 463-amino-acid polypeptide reads, in one-letter code: SCF E3 ubiquitin ligase complex F-box protein pof2 (463 aa).

The F-box domain occupies 1-42; it reads MRVPNEVCFNILSYLEADELRCKSTVCTSWRNFIIPTLWEKV. LRR repeat units follow at residues 145-170, 171-196, 198-220, 225-247, 249-271, 278-299, 304-326, 328-353, 354-378, and 380-405; these read CPNL…IIKR, CPYL…LSEK, DLIE…SRLV, GLKE…LNLN, ELDA…DIEL, KLNS…LSLT, SLTT…CLLK, CKNI…IAKL, PYLQ…LSGS, and SRNL…LMYN.

Part of a SCF E3 ubiquitin ligase complex. Interacts with skp1.

The protein localises to the mitochondrion. Functionally, involved in substrate recognition in ubiquitin-dependent degradation. The chain is SCF E3 ubiquitin ligase complex F-box protein pof2 (pof2) from Schizosaccharomyces pombe (strain 972 / ATCC 24843) (Fission yeast).